Reading from the N-terminus, the 886-residue chain is Alanine--tRNA ligase (886 aa).

Zn(2+)-binding residues include His-570, His-574, Cys-673, and His-677.

Belongs to the class-II aminoacyl-tRNA synthetase family. It depends on Zn(2+) as a cofactor.

It localises to the cytoplasm. It carries out the reaction tRNA(Ala) + L-alanine + ATP = L-alanyl-tRNA(Ala) + AMP + diphosphate. Its function is as follows. Catalyzes the attachment of alanine to tRNA(Ala) in a two-step reaction: alanine is first activated by ATP to form Ala-AMP and then transferred to the acceptor end of tRNA(Ala). Also edits incorrectly charged Ser-tRNA(Ala) and Gly-tRNA(Ala) via its editing domain. The sequence is that of Alanine--tRNA ligase from Chlorobium chlorochromatii (strain CaD3).